Reading from the N-terminus, the 214-residue chain is Osteoclast-stimulating factor 1 (214 aa).

At Ser2 the chain carries N-acetylserine. Positions 12–71 (GQVKVFRALYTFEPRTPDELYFEEGDIIYITDMSDTNWWKGTCKGRTGLIPSNYVAEQAE) constitute an SH3 domain. ANK repeat units follow at residues 72-101 (SIDN…GVNG), 105-135 (AGST…ELNQ), and 139-168 (LGDT…RTDL). A phosphoserine mark is found at Ser202 and Ser213.

In terms of assembly, interacts with SRC and SMN1. Interacts with FASLG.

Its subcellular location is the cytoplasm. Functionally, induces bone resorption, acting probably through a signaling cascade which results in the secretion of factor(s) enhancing osteoclast formation and activity. In Bos taurus (Bovine), this protein is Osteoclast-stimulating factor 1 (OSTF1).